A 258-amino-acid chain; its full sequence is uncharacterized protein (258 aa).

This is an uncharacterized protein from Mycobacterium tuberculosis (strain CDC 1551 / Oshkosh).